We begin with the raw amino-acid sequence, 824 residues long: Glycerol-3-phosphate acyltransferase (824 aa).

The short motif at 302–307 is the HXXXXD motif element; the sequence is CHRSHM.

It belongs to the GPAT/DAPAT family.

It localises to the cell inner membrane. The catalysed reaction is sn-glycerol 3-phosphate + an acyl-CoA = a 1-acyl-sn-glycero-3-phosphate + CoA. The protein operates within phospholipid metabolism; CDP-diacylglycerol biosynthesis; CDP-diacylglycerol from sn-glycerol 3-phosphate: step 1/3. This chain is Glycerol-3-phosphate acyltransferase, found in Actinobacillus pleuropneumoniae serotype 7 (strain AP76).